A 196-amino-acid chain; its full sequence is Holliday junction branch migration complex subunit RuvA (196 aa).

A domain I region spans residues 1–63 (MYDYIKGTLV…DDAHLLFGFH (63 aa)). The segment at 64–142 (TEDEKEVFLK…ELPAETTNTT (79 aa)) is domain II. Residues 143–146 (ANQT) form a flexible linker region. The segment at 147–196 (AGNQQLDEAMEALLALGYKSTELKKVKAFFEDTNETAEQYIKSALKMLMK) is domain III.

The protein belongs to the RuvA family. In terms of assembly, homotetramer. Forms an RuvA(8)-RuvB(12)-Holliday junction (HJ) complex. HJ DNA is sandwiched between 2 RuvA tetramers; dsDNA enters through RuvA and exits via RuvB. An RuvB hexamer assembles on each DNA strand where it exits the tetramer. Each RuvB hexamer is contacted by two RuvA subunits (via domain III) on 2 adjacent RuvB subunits; this complex drives branch migration. In the full resolvosome a probable DNA-RuvA(4)-RuvB(12)-RuvC(2) complex forms which resolves the HJ.

The protein localises to the cytoplasm. The RuvA-RuvB-RuvC complex processes Holliday junction (HJ) DNA during genetic recombination and DNA repair, while the RuvA-RuvB complex plays an important role in the rescue of blocked DNA replication forks via replication fork reversal (RFR). RuvA specifically binds to HJ cruciform DNA, conferring on it an open structure. The RuvB hexamer acts as an ATP-dependent pump, pulling dsDNA into and through the RuvAB complex. HJ branch migration allows RuvC to scan DNA until it finds its consensus sequence, where it cleaves and resolves the cruciform DNA. This Streptococcus thermophilus (strain CNRZ 1066) protein is Holliday junction branch migration complex subunit RuvA.